The primary structure comprises 367 residues: Heme A synthase (367 aa).

5 consecutive transmembrane segments (helical) span residues 25-45 (AIRIWLGCVLLALFALVLVGG), 111-131 (FLARAMGVIFGVPLLFFVLTG), 137-157 (LWLPLGGIFLLGGLQGAIGWW), 174-194 (LATHLVTACLIFASCMWFMRA), and 211-231 (LAGLIAFMSLFQIYLGALVAG). His-274 is a binding site for heme. A run of 3 helical transmembrane segments spans residues 276–296 (LGAYALFAVVAVNMIISLRAA), 305–325 (SVVLFVLVLIQAILGITTLLL), and 327–347 (VPLHLALTHQAGALIVFGFAI). His-335 contributes to the heme binding site.

The protein belongs to the COX15/CtaA family. Type 2 subfamily. In terms of assembly, interacts with CtaB. Heme b serves as cofactor.

The protein localises to the cell membrane. It catalyses the reaction Fe(II)-heme o + 2 A + H2O = Fe(II)-heme a + 2 AH2. Its pathway is porphyrin-containing compound metabolism; heme A biosynthesis; heme A from heme O: step 1/1. Catalyzes the conversion of heme O to heme A by two successive hydroxylations of the methyl group at C8. The first hydroxylation forms heme I, the second hydroxylation results in an unstable dihydroxymethyl group, which spontaneously dehydrates, resulting in the formyl group of heme A. The protein is Heme A synthase of Rhizobium rhizogenes (strain K84 / ATCC BAA-868) (Agrobacterium radiobacter).